Here is a 323-residue protein sequence, read N- to C-terminus: tRNA-modifying protein YgfZ (323 aa).

Trp-29 and Trp-182 together coordinate folate.

It belongs to the tRNA-modifying YgfZ family.

Its subcellular location is the cytoplasm. Folate-binding protein involved in regulating the level of ATP-DnaA and in the modification of some tRNAs. It is probably a key factor in regulatory networks that act via tRNA modification, such as initiation of chromosomal replication. This chain is tRNA-modifying protein YgfZ, found in Vibrio atlanticus (strain LGP32) (Vibrio splendidus (strain Mel32)).